Reading from the N-terminus, the 486-residue chain is Argininosuccinate lyase (486 aa).

The protein belongs to the lyase 1 family. Argininosuccinate lyase subfamily.

The protein resides in the cytoplasm. The enzyme catalyses 2-(N(omega)-L-arginino)succinate = fumarate + L-arginine. The protein operates within amino-acid biosynthesis; L-arginine biosynthesis; L-arginine from L-ornithine and carbamoyl phosphate: step 3/3. This chain is Argininosuccinate lyase, found in Acidovorax ebreus (strain TPSY) (Diaphorobacter sp. (strain TPSY)).